We begin with the raw amino-acid sequence, 235 residues long: Transmembrane protein 215 (235 aa).

A run of 2 helical transmembrane segments spans residues 12–32 (LVVA…VSGM) and 40–60 (IPLL…IALA). The tract at residues 99–158 (SDLESGKGSSDELAKKAGLRGKPSLQGQGELPMASSITTPTPMEEGECQSPGQSGRREET) is disordered.

The protein localises to the membrane. This is Transmembrane protein 215 (TMEM215) from Bos taurus (Bovine).